Reading from the N-terminus, the 238-residue chain is Large ribosomal subunit protein uL2 (238 aa).

The disordered stretch occupies residues 199-238 (PHGGGLHQSVSRSSTVARNTPPGRKVGHIAARRTGRRDRK). A compositionally biased stretch (polar residues) spans 206-216 (QSVSRSSTVAR). Over residues 223–238 (KVGHIAARRTGRRDRK) the composition is skewed to basic residues.

It belongs to the universal ribosomal protein uL2 family. As to quaternary structure, part of the 50S ribosomal subunit. Forms a bridge to the 30S subunit in the 70S ribosome.

Functionally, one of the primary rRNA binding proteins. Required for association of the 30S and 50S subunits to form the 70S ribosome, for tRNA binding and peptide bond formation. It has been suggested to have peptidyltransferase activity; this is somewhat controversial. Makes several contacts with the 16S rRNA in the 70S ribosome. The chain is Large ribosomal subunit protein uL2 from Metallosphaera sedula (strain ATCC 51363 / DSM 5348 / JCM 9185 / NBRC 15509 / TH2).